The chain runs to 108 residues: Urease subunit beta (108 aa).

This sequence belongs to the urease beta subunit family. As to quaternary structure, probable heterotrimer of UreA (gamma), UreB (beta) and UreC (alpha) subunits. Three heterotrimers associate to form the active enzyme. The trimeric urease interacts with an accessory complex composed of UreD, UreF and UreG, which is required for the assembly of the nickel containing metallocenter of UreC. The UreE protein may also play a direct role in nickel transfer to the urease apoprotein.

It is found in the cytoplasm. It carries out the reaction urea + 2 H2O + H(+) = hydrogencarbonate + 2 NH4(+). It participates in nitrogen metabolism; urea degradation; CO(2) and NH(3) from urea (urease route): step 1/1. The sequence is that of Urease subunit beta from Proteus mirabilis (strain HI4320).